The chain runs to 613 residues: tRNA 5-methylaminomethyl-2-thiouridine biosynthesis bifunctional protein MnmC (613 aa).

A tRNA (mnm(5)s(2)U34)-methyltransferase region spans residues 1–225; that stretch reads MKKAKLIFKD…KREMIKAYLE (225 aa). The segment at 252–613 is FAD-dependent cmnm(5)s(2)U34 oxidoreductase; sequence IGAGISSAVL…FLIRKLKKGL (362 aa).

In the N-terminal section; belongs to the methyltransferase superfamily. tRNA (mnm(5)s(2)U34)-methyltransferase family. It in the C-terminal section; belongs to the DAO family. FAD is required as a cofactor.

Its subcellular location is the cytoplasm. It catalyses the reaction 5-aminomethyl-2-thiouridine(34) in tRNA + S-adenosyl-L-methionine = 5-methylaminomethyl-2-thiouridine(34) in tRNA + S-adenosyl-L-homocysteine + H(+). Catalyzes the last two steps in the biosynthesis of 5-methylaminomethyl-2-thiouridine (mnm(5)s(2)U) at the wobble position (U34) in tRNA. Catalyzes the FAD-dependent demodification of cmnm(5)s(2)U34 to nm(5)s(2)U34, followed by the transfer of a methyl group from S-adenosyl-L-methionine to nm(5)s(2)U34, to form mnm(5)s(2)U34. In Campylobacter jejuni subsp. jejuni serotype O:6 (strain 81116 / NCTC 11828), this protein is tRNA 5-methylaminomethyl-2-thiouridine biosynthesis bifunctional protein MnmC.